The following is a 150-amino-acid chain: Large ribosomal subunit protein uL15 (150 aa).

Positions 1 to 55 (MADNEILQMHDLKPAPGAKKDRTRVGRGEGSKGKTAGRGAKGQTKRNHVRPGFEG) are disordered. Over residues 8 to 32 (QMHDLKPAPGAKKDRTRVGRGEGSK) the composition is skewed to basic and acidic residues.

This sequence belongs to the universal ribosomal protein uL15 family. Part of the 50S ribosomal subunit.

Its function is as follows. Binds to the 23S rRNA. The polypeptide is Large ribosomal subunit protein uL15 (Bifidobacterium longum (strain DJO10A)).